We begin with the raw amino-acid sequence, 220 residues long: Mediator of RNA polymerase II transcription subunit 19 (220 aa).

The disordered stretch occupies residues 171 to 220 (AFDLDGTGKSQSGSNSGNNSKKRKNKSSGSSMATPTHSDSHEDMKRRRLE). The segment covering 178–189 (GKSQSGSNSGNN) has biased composition (low complexity). Positions 208 to 220 (SDSHEDMKRRRLE) are enriched in basic and acidic residues.

This sequence belongs to the Mediator complex subunit 19 family. In terms of assembly, component of the Mediator complex, which is composed of at least 21 subunits that form three structurally distinct submodules. The Mediator head module contains MED6, MED8, MED11, SRB4/MED17, SRB5/MED18, ROX3/MED19, SRB2/MED20 and SRB6/MED22, the middle module contains MED1, MED4, NUT1/MED5, MED7, CSE2/MED9, NUT2/MED10, SRB7/MED21 and SOH1/MED31, and the tail module contains MED2, PGD1/MED3, RGR1/MED14, GAL11/MED15 and SIN4/MED16. The head and the middle modules interact directly with RNA polymerase II, whereas the elongated tail module interacts with gene-specific regulatory proteins.

The protein resides in the nucleus. Its function is as follows. Component of the Mediator complex, a coactivator involved in the regulated transcription of nearly all RNA polymerase II-dependent genes. Mediator functions as a bridge to convey information from gene-specific regulatory proteins to the basal RNA polymerase II transcription machinery. The Mediator complex, having a compact conformation in its free form, is recruited to promoters by direct interactions with regulatory proteins and serves for the assembly of a functional preinitiation complex with RNA polymerase II and the general transcription factors. The Mediator complex unfolds to an extended conformation and partially surrounds RNA polymerase II, specifically interacting with the unphosphorylated form of the C-terminal domain (CTD) of RNA polymerase II. The Mediator complex dissociates from the RNA polymerase II holoenzyme and stays at the promoter when transcriptional elongation begins. This Saccharomyces cerevisiae (strain ATCC 204508 / S288c) (Baker's yeast) protein is Mediator of RNA polymerase II transcription subunit 19 (ROX3).